Here is a 491-residue protein sequence, read N- to C-terminus: Cysteine--tRNA ligase (491 aa).

Position 29 (C29) interacts with Zn(2+). The short motif at 31-41 is the 'HIGH' region element; it reads PTVYDFAHIGN. Positions 227, 252, and 256 each coordinate Zn(2+). The 'KMSKS' region motif lies at 285–289; the sequence is KMSKS. K288 is an ATP binding site.

This sequence belongs to the class-I aminoacyl-tRNA synthetase family. In terms of assembly, monomer. The cofactor is Zn(2+).

The protein resides in the cytoplasm. The enzyme catalyses tRNA(Cys) + L-cysteine + ATP = L-cysteinyl-tRNA(Cys) + AMP + diphosphate. The protein is Cysteine--tRNA ligase of Rhodopseudomonas palustris (strain TIE-1).